We begin with the raw amino-acid sequence, 229 residues long: GTP cyclohydrolase 1 (229 aa).

The segment at 1–21 (MTLAKPGSGSQSRMDDKAHFK) is disordered. Residues Cys-116, His-119, and Cys-187 each coordinate Zn(2+).

It belongs to the GTP cyclohydrolase I family. In terms of assembly, toroid-shaped homodecamer, composed of two pentamers of five dimers.

It carries out the reaction GTP + H2O = 7,8-dihydroneopterin 3'-triphosphate + formate + H(+). Its pathway is cofactor biosynthesis; 7,8-dihydroneopterin triphosphate biosynthesis; 7,8-dihydroneopterin triphosphate from GTP: step 1/1. The chain is GTP cyclohydrolase 1 from Synechococcus sp. (strain JA-2-3B'a(2-13)) (Cyanobacteria bacterium Yellowstone B-Prime).